The chain runs to 515 residues: Fatty acyl-CoA reductase 1 (515 aa).

Residues 1 to 465 lie on the Cytoplasmic side of the membrane; it reads MVSIPEYYEG…ARKHLNKLRN (465 aa). The segment at 451 to 507 is necessary and sufficient for PEX19-mediated localization into peroxisome membrane; sequence SGLPAARKHLNKLRNIRYGFNTILVILIWRIFIARSQMARNIWYFVVSLCYKFLSYF. A helical membrane pass occupies residues 466–483; that stretch reads IRYGFNTILVILIWRIFI. The Peroxisomal segment spans residues 484-515; that stretch reads ARSQMARNIWYFVVSLCYKFLSYFRASSTMRY.

It belongs to the fatty acyl-CoA reductase family. In terms of assembly, interacts with PEX19; PEX19 mediates the targeting of FAR1 to peroxisomes. As to expression, widely expressed. Expressed in all tissues examined. Highest expression seen in preputial gland. Expressed in the brain where large quantities of ether lipids are synthesized.

The protein localises to the peroxisome membrane. It carries out the reaction a long-chain fatty acyl-CoA + 2 NADPH + 2 H(+) = a long-chain primary fatty alcohol + 2 NADP(+) + CoA. The catalysed reaction is hexadecanoyl-CoA + 2 NADPH + 2 H(+) = hexadecan-1-ol + 2 NADP(+) + CoA. It catalyses the reaction octadecanoyl-CoA + 2 NADPH + 2 H(+) = octadecan-1-ol + 2 NADP(+) + CoA. The enzyme catalyses (9Z)-octadecenoyl-CoA + 2 NADPH + 2 H(+) = (9Z)-octadecen-1-ol + 2 NADP(+) + CoA. It carries out the reaction (9Z,12Z)-octadecadienoyl-CoA + 2 NADPH + 2 H(+) = (9Z,12Z)-octadecadien-1-ol + 2 NADP(+) + CoA. The catalysed reaction is eicosanoyl-CoA + 2 NADPH + 2 H(+) = eicosan-1-ol + 2 NADP(+) + CoA. It catalyses the reaction 16-methylheptadecanoyl-CoA + 2 NADPH + 2 H(+) = 16-methylheptadecan-1-ol + 2 NADP(+) + CoA. The enzyme catalyses 18-methylnonadecanoyl-CoA + 2 NADPH + 2 H(+) = 18-methylnonadecan-1-ol + 2 NADP(+) + CoA. In terms of biological role, catalyzes the reduction of saturated and unsaturated C16 or C18 fatty acyl-CoA to fatty alcohols. It plays an essential role in the production of ether lipids/plasmalogens which synthesis requires fatty alcohols. In parallel, it is also required for wax monoesters production since fatty alcohols also constitute a substrate for their synthesis. The chain is Fatty acyl-CoA reductase 1 from Mus musculus (Mouse).